A 153-amino-acid polypeptide reads, in one-letter code: DNA gyrase inhibitor 1 (153 aa).

Belongs to the DNA gyrase inhibitor family. In terms of assembly, interacts with DNA gyrase.

The protein resides in the cytoplasm. In terms of biological role, inhibits the supercoiling activity of DNA gyrase. Acts by inhibiting DNA gyrase at an early step, prior to (or at the step of) binding of DNA by the gyrase. It protects cells against toxins that target DNA gyrase, by inhibiting activity of these toxins and reducing the formation of lethal double-strand breaks in the cell. In Dickeya dadantii (strain 3937) (Erwinia chrysanthemi (strain 3937)), this protein is DNA gyrase inhibitor 1.